The chain runs to 225 residues: Endonuclease V (225 aa).

Mg(2+) contacts are provided by Asp43 and Asp110.

Belongs to the endonuclease V family. The cofactor is Mg(2+).

It localises to the cytoplasm. The enzyme catalyses Endonucleolytic cleavage at apurinic or apyrimidinic sites to products with a 5'-phosphate.. In terms of biological role, DNA repair enzyme involved in the repair of deaminated bases. Selectively cleaves double-stranded DNA at the second phosphodiester bond 3' to a deoxyinosine leaving behind the intact lesion on the nicked DNA. This Thermotoga neapolitana (strain ATCC 49049 / DSM 4359 / NBRC 107923 / NS-E) protein is Endonuclease V.